Reading from the N-terminus, the 24-residue chain is Protein YahV (24 aa).

A helical transmembrane segment spans residues 4 to 24; the sequence is ILLNVLNIVFIGIAIILVIIC.

Its subcellular location is the cell inner membrane. This is Protein YahV from Escherichia coli (strain K12).